We begin with the raw amino-acid sequence, 660 residues long: Phosphatidylinositol-3-phosphate phosphatase MTMR7 (660 aa).

The Myotubularin phosphatase domain maps to 126 to 504; the sequence is GWLLVDLSEE…FTYKFWNGMY (379 aa). Residues Asn250, Asn275, and Ile276 each contribute to the a 1,2-diacyl-sn-glycero-3-phospho-(1D-myo-inositol-3-phosphate) site. The active-site Phosphocysteine intermediate is the Cys338. Positions 339, 340, 341, 342, 343, 344, and 384 each coordinate a 1,2-diacyl-sn-glycero-3-phospho-(1D-myo-inositol-3-phosphate). Residues 514–548 adopt a coiled-coil conformation; the sequence is RQSVTDYLMAVKEESQQLEEELESLEERLEKIQKV. A disordered region spans residues 550 to 660; sequence LHGTKVKSKQ…DSDEAVFLTA (111 aa). The segment covering 566–596 has biased composition (polar residues); the sequence is SGFSTSDHSTANTPQDYSGNSKSFPSRSPSQ. Thr578 carries the post-translational modification Phosphothreonine. Residues 641 to 653 show a composition bias toward basic and acidic residues; that stretch reads APSEDSGKDRDSD.

It belongs to the protein-tyrosine phosphatase family. Non-receptor class myotubularin subfamily. As to quaternary structure, heterodimer (via C-terminus) with MTMR9 (via coiled coil domain); the interaction enhances MTMR7 catalytic activity. Does not homodimerize. Interacts with RAB1B (in GDP-bound form). Highly expressed in brain (at protein level). Expressed at low levels in liver, kidney and testis.

Its subcellular location is the cytoplasm. The protein localises to the endomembrane system. The catalysed reaction is a 1,2-diacyl-sn-glycero-3-phospho-(1D-myo-inositol-3-phosphate) + H2O = a 1,2-diacyl-sn-glycero-3-phospho-(1D-myo-inositol) + phosphate. It carries out the reaction 1D-myo-inositol 1,3-bisphosphate + H2O = 1D-myo-inositol 1-phosphate + phosphate. Its activity is regulated as follows. Interaction with MTMR9 increases phosphatase activity. Lipid phosphatase that specifically dephosphorylates the D-3 position of phosphatidylinositol 3-phosphate (PtdIns(3)P) and inositol 1,3-bisphosphate (Ins(1,3)P2). This Mus musculus (Mouse) protein is Phosphatidylinositol-3-phosphate phosphatase MTMR7.